A 152-amino-acid polypeptide reads, in one-letter code: Transcriptional regulator MraZ (152 aa).

SpoVT-AbrB domains are found at residues 5–52 and 81–124; these read ASAI…PVQE and AHEC…DEAA.

The protein belongs to the MraZ family. Forms oligomers.

It is found in the cytoplasm. The protein resides in the nucleoid. This is Transcriptional regulator MraZ from Shewanella piezotolerans (strain WP3 / JCM 13877).